Consider the following 126-residue polypeptide: Large ribosomal subunit protein uL14 (126 aa).

Belongs to the universal ribosomal protein uL14 family. As to quaternary structure, part of the 50S ribosomal subunit. Forms a cluster with proteins L3 and L19. In the 70S ribosome, L14 and L19 interact and together make contacts with the 16S rRNA in bridges B5 and B8.

Its function is as follows. Binds to 23S rRNA. Forms part of two intersubunit bridges in the 70S ribosome. The polypeptide is Large ribosomal subunit protein uL14 (Persephonella marina (strain DSM 14350 / EX-H1)).